Reading from the N-terminus, the 587-residue chain is Aspartate--tRNA ligase (587 aa).

L-aspartate is bound at residue Glu-175. The interval 199-202 is aspartate; sequence QQFK. L-aspartate contacts are provided by Arg-221 and His-446. Residue 221 to 223 coordinates ATP; that stretch reads RDE. An ATP-binding site is contributed by Glu-480. Arg-487 lines the L-aspartate pocket. Position 532–535 (532–535) interacts with ATP; it reads GVDR.

The protein belongs to the class-II aminoacyl-tRNA synthetase family. Type 1 subfamily. In terms of assembly, homodimer.

It localises to the cytoplasm. The enzyme catalyses tRNA(Asp) + L-aspartate + ATP = L-aspartyl-tRNA(Asp) + AMP + diphosphate. Its function is as follows. Catalyzes the attachment of L-aspartate to tRNA(Asp) in a two-step reaction: L-aspartate is first activated by ATP to form Asp-AMP and then transferred to the acceptor end of tRNA(Asp). This is Aspartate--tRNA ligase from Streptomyces avermitilis (strain ATCC 31267 / DSM 46492 / JCM 5070 / NBRC 14893 / NCIMB 12804 / NRRL 8165 / MA-4680).